The primary structure comprises 93 residues: Integration host factor subunit beta (93 aa).

The protein belongs to the bacterial histone-like protein family. As to quaternary structure, heterodimer of an alpha and a beta chain.

Its function is as follows. This protein is one of the two subunits of integration host factor, a specific DNA-binding protein that functions in genetic recombination as well as in transcriptional and translational control. The chain is Integration host factor subunit beta from Aliivibrio salmonicida (strain LFI1238) (Vibrio salmonicida (strain LFI1238)).